The chain runs to 253 residues: Non-homologous end joining protein Ku (253 aa).

The region spanning isoleucine 9–alanine 192 is the Ku domain.

This sequence belongs to the prokaryotic Ku family. Homodimer. Interacts with LigD.

Its function is as follows. With LigD forms a non-homologous end joining (NHEJ) DNA repair enzyme, which repairs dsDNA breaks with reduced fidelity. Binds linear dsDNA with 5'- and 3'- overhangs but not closed circular dsDNA nor ssDNA. Recruits and stimulates the ligase activity of LigD. In Archaeoglobus fulgidus (strain ATCC 49558 / DSM 4304 / JCM 9628 / NBRC 100126 / VC-16), this protein is Non-homologous end joining protein Ku.